We begin with the raw amino-acid sequence, 469 residues long: Adenosylhomocysteinase (469 aa).

Residues T63, D139, and E164 each contribute to the substrate site. 165-167 (TTT) contributes to the NAD(+) binding site. 2 residues coordinate substrate: K194 and D198. Residues N199, 228 to 233 (GYGDVG), E251, N300, 321 to 323 (IGH), and N375 contribute to the NAD(+) site.

The protein belongs to the adenosylhomocysteinase family. It depends on NAD(+) as a cofactor.

The protein resides in the cytoplasm. It catalyses the reaction S-adenosyl-L-homocysteine + H2O = L-homocysteine + adenosine. Its pathway is amino-acid biosynthesis; L-homocysteine biosynthesis; L-homocysteine from S-adenosyl-L-homocysteine: step 1/1. In terms of biological role, may play a key role in the regulation of the intracellular concentration of adenosylhomocysteine. This Pseudomonas fluorescens (strain ATCC BAA-477 / NRRL B-23932 / Pf-5) protein is Adenosylhomocysteinase.